Here is a 291-residue protein sequence, read N- to C-terminus: 33 kDa chaperonin (291 aa).

Cystine bridges form between Cys-229–Cys-231 and Cys-262–Cys-265.

It belongs to the HSP33 family. Under oxidizing conditions two disulfide bonds are formed involving the reactive cysteines. Under reducing conditions zinc is bound to the reactive cysteines and the protein is inactive.

It is found in the cytoplasm. Its function is as follows. Redox regulated molecular chaperone. Protects both thermally unfolding and oxidatively damaged proteins from irreversible aggregation. Plays an important role in the bacterial defense system toward oxidative stress. The protein is 33 kDa chaperonin of Vibrio vulnificus (strain YJ016).